The chain runs to 242 residues: Galectin-3 (242 aa).

The tract at residues M1–G35 is disordered. A2 bears the N-acetylalanine mark. S6 carries the post-translational modification Phosphoserine; by CK1. Position 12 is a phosphoserine (S12). Low complexity predominate over residues P17–A31. Repeat copies occupy residues G35–G43, A44–A52, Y53–P61, and Y62–A70. Residues G35–P98 form a 7 X 9 AA tandem repeats of Y-P-G-X(3)-P-[GS]-A region. The interval G55–Y93 is disordered. Residues Y71–A80 form a 5; approximate repeat. Positions A80–Y93 are enriched in low complexity. One copy of the 6; approximate repeat lies at Y81–A92. One copy of the 7; truncated repeat lies at Y93–P98. In terms of domain architecture, Galectin spans Y110–A240. An a beta-D-galactoside-binding site is contributed by W173–T181. A Nuclear export signal motif is present at residues R218 to Q233.

As to quaternary structure, probably forms homo- or heterodimers. Interacts with DMBT1. Interacts with CD6 and ALCAM. Forms a complex with the ITGA3, ITGB1 and CSPG4. Interacts with LGALS3BP, LYPD3, ZFTRAF1 and UACA. Interacts with TRIM16; this interaction mediates autophagy of damage endomembranes. Interacts with cargo receptor TMED10; the interaction mediates the translocation from the cytoplasm into the ERGIC (endoplasmic reticulum-Golgi intermediate compartment) and thereby secretion. Interacts with and inhibits by binding NCR3/NKp30.

It localises to the cytoplasm. It is found in the nucleus. Its subcellular location is the secreted. In terms of biological role, galactose-specific lectin which binds IgE. May mediate with the alpha-3, beta-1 integrin the stimulation by CSPG4 of endothelial cells migration. Together with DMBT1, required for terminal differentiation of columnar epithelial cells during early embryogenesis. In the nucleus: acts as a pre-mRNA splicing factor. Involved in acute inflammatory responses including neutrophil activation and adhesion, chemoattraction of monocytes macrophages, opsonization of apoptotic neutrophils, and activation of mast cells. Together with TRIM16, coordinates the recognition of membrane damage with mobilization of the core autophagy regulators ATG16L1 and BECN1 in response to damaged endomembranes. When secreted, interacts with NK cell-activating receptor NCR3/NKp30 acting as an inhibitory ligand which antagonizes NK cell attack. This chain is Galectin-3 (LGALS3), found in Oryctolagus cuniculus (Rabbit).